Reading from the N-terminus, the 551-residue chain is Probable alpha-glucosidase (551 aa).

The active-site Nucleophile is Asp212. The active-site Proton donor is Glu272.

Belongs to the glycosyl hydrolase 13 family.

It carries out the reaction Hydrolysis of terminal, non-reducing (1-&gt;4)-linked alpha-D-glucose residues with release of alpha-D-glucose.. The sequence is that of Probable alpha-glucosidase (aglA) from Rhizobium meliloti (strain 1021) (Ensifer meliloti).